A 506-amino-acid polypeptide reads, in one-letter code: 2-isopropylmalate synthase (506 aa).

The Pyruvate carboxyltransferase domain occupies L8 to L272. D17, H206, H208, and N242 together coordinate Mn(2+). The segment at E396–L506 is regulatory domain.

This sequence belongs to the alpha-IPM synthase/homocitrate synthase family. LeuA type 1 subfamily. Homodimer. Mn(2+) serves as cofactor.

Its subcellular location is the cytoplasm. The enzyme catalyses 3-methyl-2-oxobutanoate + acetyl-CoA + H2O = (2S)-2-isopropylmalate + CoA + H(+). It participates in amino-acid biosynthesis; L-leucine biosynthesis; L-leucine from 3-methyl-2-oxobutanoate: step 1/4. In terms of biological role, catalyzes the condensation of the acetyl group of acetyl-CoA with 3-methyl-2-oxobutanoate (2-ketoisovalerate) to form 3-carboxy-3-hydroxy-4-methylpentanoate (2-isopropylmalate). In Methylacidiphilum infernorum (isolate V4) (Methylokorus infernorum (strain V4)), this protein is 2-isopropylmalate synthase.